We begin with the raw amino-acid sequence, 1942 residues long: Probable helicase with zinc finger domain (1942 aa).

The segment at 178 to 206 (SEEYTLCKRFLEQGICRYGAQCTSAHSQE) adopts a C3H1-type zinc-finger fold. Ser-248 carries the post-translational modification Phosphoserine. 668 to 675 (GPYGTGKT) is a binding site for ATP. The DEAA box signature appears at 794–797 (DEAA). Positions 1117 to 1127 (SGSTNKQQQSP) are enriched in polar residues. The disordered stretch occupies residues 1117–1141 (SGSTNKQQQSPPKGKSLHHTQNDHF). Thr-1163 is subject to Phosphothreonine. An Omega-N-methylarginine modification is found at Arg-1245. Disordered stretches follow at residues 1246-1345 (GSPI…INLP), 1386-1429 (NLPE…GPNN), 1527-1552 (QGSAPYPHHHHPHLQHLPQPPLGLHQ), and 1608-1637 (RQVQSRSPPAVPSPPSSTDHSSHFSNFNDN). Composition is skewed to basic and acidic residues over residues 1268-1281 (HQEKDQHEQNRNGK) and 1292-1308 (NKIRTPEKKPTEPKQVD). Residues 1399–1412 (NQVVQQQSQLNQQP) show a composition bias toward low complexity. Ser-1614 carries the phosphoserine modification. Over residues 1623–1636 (SSTDHSSHFSNFND) the composition is skewed to low complexity. Ser-1645, Ser-1738, Ser-1741, and Ser-1766 each carry phosphoserine. Disordered stretches follow at residues 1729 to 1779 (FHPL…TPQD), 1792 to 1843 (NQSS…PEDQ), and 1870 to 1942 (MPNK…SYFK). Residues 1731–1745 (PLSSRTVSSSSLPSL) show a composition bias toward low complexity. Composition is skewed to polar residues over residues 1761 to 1779 (RISSSSVQPCSEEVSTPQD) and 1792 to 1825 (NQSSFNFSSPESWVNTTSSTPYQNIPCNGSSRTA). 2 stretches are compositionally biased toward low complexity: residues 1876–1888 (AESANSSSPQSSA) and 1920–1942 (LSLFQELSLGSSSGSNGFYSYFK).

It belongs to the DNA2/NAM7 helicase family. Interacts with SMYD2. Interacts with POLR2A. Interacts with SMYD3; the interaction may bridge SMYD3 and RNA polymerase II. Expressed predominantly in thymus and brain. Expression is down-regulated in 28 of 95 tested cancer cell lines.

Its subcellular location is the nucleus. In terms of biological role, may act as a helicase that plays a role in RNA metabolism in multiple tissues and organs within the developing embryo. The chain is Probable helicase with zinc finger domain (HELZ) from Homo sapiens (Human).